Consider the following 342-residue polypeptide: Glycerol-1-phosphate dehydrogenase [NAD(P)+] (342 aa).

Residues 84 to 88 (GRPID) and 106 to 109 (TAAS) contribute to the NAD(+) site. A substrate-binding site is contributed by D111. Position 115 (S115) interacts with NAD(+). D160 provides a ligand contact to substrate. D160 and H241 together coordinate Zn(2+). Residue H245 participates in substrate binding. A Zn(2+)-binding site is contributed by H260.

It belongs to the glycerol-1-phosphate dehydrogenase family. In terms of assembly, homodimer. Zn(2+) is required as a cofactor.

It localises to the cytoplasm. The enzyme catalyses sn-glycerol 1-phosphate + NAD(+) = dihydroxyacetone phosphate + NADH + H(+). The catalysed reaction is sn-glycerol 1-phosphate + NADP(+) = dihydroxyacetone phosphate + NADPH + H(+). Its pathway is membrane lipid metabolism; glycerophospholipid metabolism. Functionally, catalyzes the NAD(P)H-dependent reduction of dihydroxyacetonephosphate (DHAP or glycerone phosphate) to glycerol 1-phosphate (G1P). The G1P thus generated is used as the glycerophosphate backbone of phospholipids in the cellular membranes of Archaea. The protein is Glycerol-1-phosphate dehydrogenase [NAD(P)+] of Pyrobaculum aerophilum (strain ATCC 51768 / DSM 7523 / JCM 9630 / CIP 104966 / NBRC 100827 / IM2).